The following is a 361-amino-acid chain: MNDGTDYRALLLADTPLIDVRAPIEFEQGAMPGAINLPLMMDDERAAVGTCYKRQGADAALALGHRLVCGDIRQQRLEAWKAAYQRFPNGYLCCARGGQRSHIVQRWLQETGIDCPLIEGGYKALRQTAIQATWQLAQKPILLIGGCTGSGKTQLVRQQPNGVDLEGLARHRGSSFGRTLKPQLSQASFENKLAVELLKINARQTLKRWVLEDEGRTIGANHLPECLRERMVQAPIAVVEDPFSLRLERLREEYFIRMHHDFTHAYGDEAGWQAYSEYLHHGLFAIRRRLGLQRFAELTDTLDRALAEQLSSGSTDGHMAWLVPLLNEYYDPMYRYQLEKKAANIVFRGTWQDVANWLKAQ.

One can recognise a Rhodanese domain in the interval 11–134; sequence LLADTPLIDV…LRQTAIQATW (124 aa). The S-selanylcysteine intermediate role is filled by Cys-94.

This sequence belongs to the SelU family. Monomer.

It catalyses the reaction 5-methylaminomethyl-2-thiouridine(34) in tRNA + selenophosphate + (2E)-geranyl diphosphate + H2O + H(+) = 5-methylaminomethyl-2-selenouridine(34) in tRNA + (2E)-thiogeraniol + phosphate + diphosphate. The enzyme catalyses 5-methylaminomethyl-2-thiouridine(34) in tRNA + (2E)-geranyl diphosphate = 5-methylaminomethyl-S-(2E)-geranyl-thiouridine(34) in tRNA + diphosphate. The catalysed reaction is 5-methylaminomethyl-S-(2E)-geranyl-thiouridine(34) in tRNA + selenophosphate + H(+) = 5-methylaminomethyl-2-(Se-phospho)selenouridine(34) in tRNA + (2E)-thiogeraniol. It carries out the reaction 5-methylaminomethyl-2-(Se-phospho)selenouridine(34) in tRNA + H2O = 5-methylaminomethyl-2-selenouridine(34) in tRNA + phosphate. In terms of biological role, involved in the post-transcriptional modification of the uridine at the wobble position (U34) of tRNA(Lys), tRNA(Glu) and tRNA(Gln). Catalyzes the conversion of 2-thiouridine (S2U-RNA) to 2-selenouridine (Se2U-RNA). Acts in a two-step process involving geranylation of 2-thiouridine (S2U) to S-geranyl-2-thiouridine (geS2U) and subsequent selenation of the latter derivative to 2-selenouridine (Se2U) in the tRNA chain. The protein is tRNA 2-selenouridine synthase of Salmonella schwarzengrund (strain CVM19633).